A 327-amino-acid chain; its full sequence is Malate dehydrogenase (327 aa).

Residue 12–18 (GAAGQIG) coordinates NAD(+). Substrate-binding residues include Arg93 and Arg99. NAD(+)-binding positions include Asn106, Gln113, and 130–132 (VGN). Positions 132 and 163 each coordinate substrate. His188 functions as the Proton acceptor in the catalytic mechanism.

The protein belongs to the LDH/MDH superfamily. MDH type 2 family.

The enzyme catalyses (S)-malate + NAD(+) = oxaloacetate + NADH + H(+). Its function is as follows. Catalyzes the reversible oxidation of malate to oxaloacetate. The protein is Malate dehydrogenase of Paraburkholderia phymatum (strain DSM 17167 / CIP 108236 / LMG 21445 / STM815) (Burkholderia phymatum).